Reading from the N-terminus, the 322-residue chain is Ribosomal lysine N-methyltransferase 5 (322 aa).

S-adenosyl-L-methionine is bound by residues Trp-92, Gly-141–Gly-143, Asp-163, Trp-214, and Met-242.

The protein belongs to the class I-like SAM-binding methyltransferase superfamily. RKM5 family.

Functionally, S-adenosyl-L-methionine-dependent protein-lysine N-methyltransferase that methylates 60S ribosomal protein L1. This Kluyveromyces lactis (strain ATCC 8585 / CBS 2359 / DSM 70799 / NBRC 1267 / NRRL Y-1140 / WM37) (Yeast) protein is Ribosomal lysine N-methyltransferase 5 (RKM5).